A 91-amino-acid polypeptide reads, in one-letter code: uncharacterized protein (91 aa).

This is an uncharacterized protein from Saccharolobus islandicus (Sulfolobus islandicus).